We begin with the raw amino-acid sequence, 382 residues long: UDP-4-amino-4-deoxy-L-arabinose--oxoglutarate aminotransferase (382 aa).

The residue at position 183 (lysine 183) is an N6-(pyridoxal phosphate)lysine.

It belongs to the DegT/DnrJ/EryC1 family. ArnB subfamily. Homodimer. It depends on pyridoxal 5'-phosphate as a cofactor.

It carries out the reaction UDP-4-amino-4-deoxy-beta-L-arabinose + 2-oxoglutarate = UDP-beta-L-threo-pentopyranos-4-ulose + L-glutamate. It functions in the pathway nucleotide-sugar biosynthesis; UDP-4-deoxy-4-formamido-beta-L-arabinose biosynthesis; UDP-4-deoxy-4-formamido-beta-L-arabinose from UDP-alpha-D-glucuronate: step 2/3. The protein operates within bacterial outer membrane biogenesis; lipopolysaccharide biosynthesis. In terms of biological role, catalyzes the conversion of UDP-4-keto-arabinose (UDP-Ara4O) to UDP-4-amino-4-deoxy-L-arabinose (UDP-L-Ara4N). The modified arabinose is attached to lipid A and is required for resistance to polymyxin and cationic antimicrobial peptides. In Pseudomonas syringae pv. syringae (strain B728a), this protein is UDP-4-amino-4-deoxy-L-arabinose--oxoglutarate aminotransferase.